The chain runs to 552 residues: Putative transport protein NT01EI_3867 (552 aa).

The next 5 membrane-spanning stretches (helical) occupy residues 4 to 24 (IALT…IGNW), 26 to 46 (IYGV…VGHF), 65 to 85 (FGLI…FFSS), 90 to 112 (GLRL…AAIH), and 158 to 178 (MGYA…IWLI). RCK C-terminal domains are found at residues 191–276 (RDFD…VIGE) and 279–361 (DTSL…IVGN). The next 6 helical transmembrane spans lie at 371–391 (MLPV…PLFI), 403–425 (AGGP…LYWF), 439–459 (IVLF…DTLL), 464–484 (VTWI…AALL), 493–513 (YLTL…LAFA), and 530–550 (VYPL…LLFW).

Belongs to the AAE transporter (TC 2.A.81) family. YidE subfamily.

It localises to the cell membrane. The polypeptide is Putative transport protein NT01EI_3867 (Edwardsiella ictaluri (strain 93-146)).